The chain runs to 51 residues: Sperm protamine P1 (51 aa).

This sequence belongs to the protamine P1 family. As to expression, testis.

The protein resides in the nucleus. It localises to the chromosome. Protamines substitute for histones in the chromatin of sperm during the haploid phase of spermatogenesis. They compact sperm DNA into a highly condensed, stable and inactive complex. This Nasalis larvatus (Proboscis monkey) protein is Sperm protamine P1 (PRM1).